The primary structure comprises 115 residues: uncharacterized protein (115 aa).

A run of 3 helical transmembrane segments spans residues 6-26 (ILIILVIILTTYFTRIWPFMV), 43-63 (ALSCSVIGMLVIYCFKDIHIL), and 84-104 (IFKVFVLSITLPTILYMVLVQ).

The protein belongs to the AzlD/HI_1737/HP1330 family.

The protein localises to the cell membrane. This is an uncharacterized protein from Helicobacter pylori (strain ATCC 700392 / 26695) (Campylobacter pylori).